A 282-amino-acid chain; its full sequence is Pantothenate synthetase (282 aa).

30–37 (MGALHQGH) serves as a coordination point for ATP. H37 (proton donor) is an active-site residue. Q61 is a binding site for (R)-pantoate. A beta-alanine-binding site is contributed by Q61. 149-152 (GEKD) serves as a coordination point for ATP. Q155 provides a ligand contact to (R)-pantoate. Residues L178 and 186–189 (MSSR) contribute to the ATP site.

This sequence belongs to the pantothenate synthetase family. As to quaternary structure, homodimer.

It localises to the cytoplasm. It carries out the reaction (R)-pantoate + beta-alanine + ATP = (R)-pantothenate + AMP + diphosphate + H(+). The protein operates within cofactor biosynthesis; (R)-pantothenate biosynthesis; (R)-pantothenate from (R)-pantoate and beta-alanine: step 1/1. Catalyzes the condensation of pantoate with beta-alanine in an ATP-dependent reaction via a pantoyl-adenylate intermediate. The chain is Pantothenate synthetase from Flavobacterium psychrophilum (strain ATCC 49511 / DSM 21280 / CIP 103535 / JIP02/86).